An 85-amino-acid polypeptide reads, in one-letter code: MQEGIHPEYGPVVFYDRSADKYFLTKSTLVAKAVNLPTIDWEDGNTYPLVNVEVSSYSHPFYTGKNVVIDAAGQVQKFNARYGRK.

This sequence belongs to the bacterial ribosomal protein bL31 family. Type B subfamily. Part of the 50S ribosomal subunit.

The sequence is that of Large ribosomal subunit protein bL31B from Bifidobacterium longum subsp. infantis (strain ATCC 15697 / DSM 20088 / JCM 1222 / NCTC 11817 / S12).